We begin with the raw amino-acid sequence, 319 residues long: NADH-cytochrome b5 reductase 2 (319 aa).

The chain crosses the membrane as a helical span at residues 30–46 (LAPVYLTVGLAGLGVGL). In terms of domain architecture, FAD-binding FR-type spans 69-173 (QGWVDLKLSE…KGPLPKYPWE (105 aa)). Position 176–211 (176–211 (KHQHICLIAGGTGITPMYQLARHIFKNPEDKTKVTL)) interacts with FAD.

This sequence belongs to the flavoprotein pyridine nucleotide cytochrome reductase family. Requires FAD as cofactor.

The protein localises to the mitochondrion outer membrane. It catalyses the reaction 2 Fe(III)-[cytochrome b5] + NADH = 2 Fe(II)-[cytochrome b5] + NAD(+) + H(+). Functionally, may mediate the reduction of outer membrane cytochrome b5. The protein is NADH-cytochrome b5 reductase 2 (mcr1) of Aspergillus terreus (strain NIH 2624 / FGSC A1156).